The sequence spans 202 residues: Dephospho-CoA kinase (202 aa).

Residues 4 to 202 (VIGLTGGIAT…TDKGFINKER (199 aa)) enclose the DPCK domain. 12–17 (ATGKST) lines the ATP pocket.

It belongs to the CoaE family.

It localises to the cytoplasm. It catalyses the reaction 3'-dephospho-CoA + ATP = ADP + CoA + H(+). It functions in the pathway cofactor biosynthesis; coenzyme A biosynthesis; CoA from (R)-pantothenate: step 5/5. Its function is as follows. Catalyzes the phosphorylation of the 3'-hydroxyl group of dephosphocoenzyme A to form coenzyme A. This Staphylococcus haemolyticus (strain JCSC1435) protein is Dephospho-CoA kinase.